Consider the following 444-residue polypeptide: Glutamyl-tRNA reductase (444 aa).

Substrate-binding positions include 49–52, S109, 114–116, and Q120; these read TCNR and ETQ. C50 acts as the Nucleophile in catalysis. Position 189–194 (189–194) interacts with NADP(+); the sequence is GAGKMS. Residues 425-444 form a disordered region; the sequence is KPKKQPAPAGIKEPVLAKKG.

It belongs to the glutamyl-tRNA reductase family. Homodimer.

It catalyses the reaction (S)-4-amino-5-oxopentanoate + tRNA(Glu) + NADP(+) = L-glutamyl-tRNA(Glu) + NADPH + H(+). It participates in porphyrin-containing compound metabolism; protoporphyrin-IX biosynthesis; 5-aminolevulinate from L-glutamyl-tRNA(Glu): step 1/2. Functionally, catalyzes the NADPH-dependent reduction of glutamyl-tRNA(Glu) to glutamate 1-semialdehyde (GSA). This is Glutamyl-tRNA reductase from Pelotomaculum thermopropionicum (strain DSM 13744 / JCM 10971 / SI).